The following is a 315-amino-acid chain: 4-hydroxy-3-methylbut-2-enyl diphosphate reductase (315 aa).

C12 contacts [4Fe-4S] cluster. 2 residues coordinate (2E)-4-hydroxy-3-methylbut-2-enyl diphosphate: H41 and H74. Positions 41 and 74 each coordinate dimethylallyl diphosphate. Residues H41 and H74 each coordinate isopentenyl diphosphate. A [4Fe-4S] cluster-binding site is contributed by C96. Residue H124 coordinates (2E)-4-hydroxy-3-methylbut-2-enyl diphosphate. Residue H124 coordinates dimethylallyl diphosphate. H124 lines the isopentenyl diphosphate pocket. The active-site Proton donor is the E126. Position 168 (T168) interacts with (2E)-4-hydroxy-3-methylbut-2-enyl diphosphate. C198 contributes to the [4Fe-4S] cluster binding site. 4 residues coordinate (2E)-4-hydroxy-3-methylbut-2-enyl diphosphate: S226, S227, N228, and S270. Dimethylallyl diphosphate contacts are provided by S226, S227, N228, and S270. 4 residues coordinate isopentenyl diphosphate: S226, S227, N228, and S270.

It belongs to the IspH family. [4Fe-4S] cluster serves as cofactor.

It carries out the reaction isopentenyl diphosphate + 2 oxidized [2Fe-2S]-[ferredoxin] + H2O = (2E)-4-hydroxy-3-methylbut-2-enyl diphosphate + 2 reduced [2Fe-2S]-[ferredoxin] + 2 H(+). The enzyme catalyses dimethylallyl diphosphate + 2 oxidized [2Fe-2S]-[ferredoxin] + H2O = (2E)-4-hydroxy-3-methylbut-2-enyl diphosphate + 2 reduced [2Fe-2S]-[ferredoxin] + 2 H(+). The protein operates within isoprenoid biosynthesis; dimethylallyl diphosphate biosynthesis; dimethylallyl diphosphate from (2E)-4-hydroxy-3-methylbutenyl diphosphate: step 1/1. It functions in the pathway isoprenoid biosynthesis; isopentenyl diphosphate biosynthesis via DXP pathway; isopentenyl diphosphate from 1-deoxy-D-xylulose 5-phosphate: step 6/6. In terms of biological role, catalyzes the conversion of 1-hydroxy-2-methyl-2-(E)-butenyl 4-diphosphate (HMBPP) into a mixture of isopentenyl diphosphate (IPP) and dimethylallyl diphosphate (DMAPP). Acts in the terminal step of the DOXP/MEP pathway for isoprenoid precursor biosynthesis. This chain is 4-hydroxy-3-methylbut-2-enyl diphosphate reductase, found in Pseudomonas putida (strain ATCC 700007 / DSM 6899 / JCM 31910 / BCRC 17059 / LMG 24140 / F1).